The following is a 433-amino-acid chain: Ligand-dependent corepressor (433 aa).

The interval 1–51 (MQRMIQQFAAEYTSKNSSTQDPSQPNSTKNQSLPKASPVTTSPTAATTQNP) is disordered. Positions 13–34 (TSKNSSTQDPSQPNSTKNQSLP) are enriched in polar residues. Residues 36–48 (ASPVTTSPTAATT) are compositionally biased toward low complexity. Serine 42 carries the phosphoserine modification. Residues 53–57 (LSKLL) carry the Interaction with nuclear receptors motif. Residue serine 63 is modified to Phosphoserine. Residues 64-147 (PLDLTVRKSQ…GTREGFGHST (84 aa)) form a disordered region. Over residues 93–110 (AGSTSLSHSPGCSSTQGN) the composition is skewed to polar residues. A Phosphoserine modification is found at serine 249. Residue lysine 254 forms a Glycyl lysine isopeptide (Lys-Gly) (interchain with G-Cter in SUMO2) linkage. The interval 299-348 (QSRKSMLDAGPDSWGSDAEQSTSGQPYPTSDQEGDPGSKQPRKKRGRYRQ) is disordered. Residues 316–329 (AEQSTSGQPYPTSD) show a composition bias toward polar residues. A Nuclear localization signal motif is present at residues 339 to 345 (PRKKRGR). Positions 340–392 (RKKRGRYRQYNSEILEEAISVVMSGKMSVSKAQSIYGIPHSTLEYKVKERLGT) constitute an HTH psq-type domain. Arginine 345 is covalently cross-linked (Glycyl lysine isopeptide (Lys-Gly) (interchain with G-Cter in SUMO2)). A DNA-binding region (H-T-H motif) is located at residues 368–388 (VSKAQSIYGIPHSTLEYKVKE). Residue glycine 391 forms a Glycyl lysine isopeptide (Lys-Gly) (interchain with G-Cter in SUMO2) linkage. The segment at 393 to 412 (LKNPPKKKMKLMRSEGPDVS) is disordered. Lysine 414 participates in a covalent cross-link: Glycyl lysine isopeptide (Lys-Gly) (interchain with G-Cter in SUMO2).

In terms of assembly, interacts with ESR1 and ESR2 in the presence of estradiol. Interacts with CTBP1, HDAC3 and HDAC6. Component of a large corepressor complex that contains about 20 proteins, including CTBP1, CTBP2, HDAC1 and HDAC2. Ubiquitous.

The protein localises to the nucleus. Functionally, may act as transcription activator that binds DNA elements with the sequence 5'-CCCTATCGATCGATCTCTACCT-3'. Repressor of ligand-dependent transcription activation by target nuclear receptors. Repressor of ligand-dependent transcription activation by ESR1, ESR2, NR3C1, PGR, RARA, RARB, RARG, RXRA and VDR. This Homo sapiens (Human) protein is Ligand-dependent corepressor.